Consider the following 244-residue polypeptide: Uridylate kinase (244 aa).

Residue 17–20 coordinates ATP; the sequence is KVSG. Positions 25–30 are involved in allosteric activation by GTP; sequence GEKGFG. Gly59 provides a ligand contact to UMP. Positions 60 and 64 each coordinate ATP. Residues Asp80 and 141 to 148 each bind UMP; that span reads VGNPFFTT. 4 residues coordinate ATP: Thr168, Gln169, Tyr174, and Asp177.

It belongs to the UMP kinase family. Homohexamer.

The protein localises to the cytoplasm. The catalysed reaction is UMP + ATP = UDP + ADP. It participates in pyrimidine metabolism; CTP biosynthesis via de novo pathway; UDP from UMP (UMPK route): step 1/1. With respect to regulation, allosterically activated by GTP. Inhibited by UTP. Its function is as follows. Catalyzes the reversible phosphorylation of UMP to UDP. The protein is Uridylate kinase of Ehrlichia canis (strain Jake).